The chain runs to 406 residues: Zinc finger CCCH domain-containing protein 15 homolog (406 aa).

Low complexity predominate over residues Met1 to Ser11. Positions Met1–Lys70 are disordered. A compositionally biased stretch (basic and acidic residues) spans Lys12–Phe28. The span at Gln38–Gln50 shows a compositional bias: low complexity. Basic and acidic residues predominate over residues Pro56–Lys70. Residues Arg57–Lys82 adopt a coiled-coil conformation. C3H1-type zinc fingers lie at residues Asp94–Ser121 and Pro166–Pro203. The interval Val336–Ala382 is disordered. 2 stretches are compositionally biased toward low complexity: residues Ala352–Gly364 and Pro372–Ala382.

It belongs to the ZC3H15/TMA46 family.

In Drosophila pseudoobscura pseudoobscura (Fruit fly), this protein is Zinc finger CCCH domain-containing protein 15 homolog.